The following is a 494-amino-acid chain: Glutamate decarboxylase 5 (494 aa).

An N6-(pyridoxal phosphate)lysine modification is found at Lys-276.

Belongs to the group II decarboxylase family. As to quaternary structure, homohexamer. Interacts with calmodulin. It depends on pyridoxal 5'-phosphate as a cofactor. As to expression, expressed in flowers.

It catalyses the reaction L-glutamate + H(+) = 4-aminobutanoate + CO2. Catalyzes the production of GABA. The calmodulin-binding is calcium-dependent and it is proposed that this may, directly or indirectly, form a calcium regulated control of GABA biosynthesis. This Arabidopsis thaliana (Mouse-ear cress) protein is Glutamate decarboxylase 5 (GAD5).